The chain runs to 310 residues: Aspartate carbamoyltransferase catalytic subunit (310 aa).

Carbamoyl phosphate is bound by residues Arg58 and Thr59. Lys86 serves as a coordination point for L-aspartate. Carbamoyl phosphate is bound by residues Arg108, His137, and Gln140. L-aspartate-binding residues include Arg170 and Arg225. Residues Gly264 and Pro265 each contribute to the carbamoyl phosphate site.

Belongs to the aspartate/ornithine carbamoyltransferase superfamily. ATCase family. Heterododecamer (2C3:3R2) of six catalytic PyrB chains organized as two trimers (C3), and six regulatory PyrI chains organized as three dimers (R2).

It carries out the reaction carbamoyl phosphate + L-aspartate = N-carbamoyl-L-aspartate + phosphate + H(+). Its pathway is pyrimidine metabolism; UMP biosynthesis via de novo pathway; (S)-dihydroorotate from bicarbonate: step 2/3. Functionally, catalyzes the condensation of carbamoyl phosphate and aspartate to form carbamoyl aspartate and inorganic phosphate, the committed step in the de novo pyrimidine nucleotide biosynthesis pathway. This is Aspartate carbamoyltransferase catalytic subunit from Coxiella burnetii (strain CbuK_Q154) (Coxiella burnetii (strain Q154)).